We begin with the raw amino-acid sequence, 572 residues long: Proline--tRNA ligase (572 aa).

This sequence belongs to the class-II aminoacyl-tRNA synthetase family. ProS type 1 subfamily. Homodimer.

The protein localises to the cytoplasm. It carries out the reaction tRNA(Pro) + L-proline + ATP = L-prolyl-tRNA(Pro) + AMP + diphosphate. In terms of biological role, catalyzes the attachment of proline to tRNA(Pro) in a two-step reaction: proline is first activated by ATP to form Pro-AMP and then transferred to the acceptor end of tRNA(Pro). As ProRS can inadvertently accommodate and process non-cognate amino acids such as alanine and cysteine, to avoid such errors it has two additional distinct editing activities against alanine. One activity is designated as 'pretransfer' editing and involves the tRNA(Pro)-independent hydrolysis of activated Ala-AMP. The other activity is designated 'posttransfer' editing and involves deacylation of mischarged Ala-tRNA(Pro). The misacylated Cys-tRNA(Pro) is not edited by ProRS. The polypeptide is Proline--tRNA ligase (Escherichia fergusonii (strain ATCC 35469 / DSM 13698 / CCUG 18766 / IAM 14443 / JCM 21226 / LMG 7866 / NBRC 102419 / NCTC 12128 / CDC 0568-73)).